Reading from the N-terminus, the 347-residue chain is GMP reductase (347 aa).

108–131 (ADFEKTKQILDLNPALNFVCIDVA) contributes to the NADP(+) binding site. K(+)-binding residues include G181 and G183. Catalysis depends on C186, which acts as the Thioimidate intermediate. 216–239 (IVSDGGCTTPGDVAKAFGGGADFV) serves as a coordination point for NADP(+).

It belongs to the IMPDH/GMPR family. GuaC type 1 subfamily. In terms of assembly, homotetramer.

It carries out the reaction IMP + NH4(+) + NADP(+) = GMP + NADPH + 2 H(+). Functionally, catalyzes the irreversible NADPH-dependent deamination of GMP to IMP. It functions in the conversion of nucleobase, nucleoside and nucleotide derivatives of G to A nucleotides, and in maintaining the intracellular balance of A and G nucleotides. This Shigella boydii serotype 4 (strain Sb227) protein is GMP reductase.